A 411-amino-acid chain; its full sequence is UPF0761 membrane protein PLES_43641 (411 aa).

Helical transmembrane passes span 36 to 56 (LFAV…IPAF), 92 to 112 (HLTW…LVTI), 132 to 152 (FLLY…GFAV), 174 to 194 (LLGL…YSAV), 207 to 229 (GGVF…VSLF), and 244 to 264 (IFLL…VLVC).

This sequence belongs to the UPF0761 family.

The protein resides in the cell inner membrane. In Pseudomonas aeruginosa (strain LESB58), this protein is UPF0761 membrane protein PLES_43641.